A 281-amino-acid polypeptide reads, in one-letter code: Phosphatidylglycerol--prolipoprotein diacylglyceryl transferase (281 aa).

4 helical membrane passes run 23–43 (IGPLAVHWYGLGYVVGILFAW), 71–91 (FVIWAALGVVLGGRIGYVLFY), 107–127 (WDGGMSFHGGILGTTLAMILF), and 133–153 (ILVWSMFDTIAAGVPIGLGVV). A 1,2-diacyl-sn-glycero-3-phospho-(1'-sn-glycerol) is bound at residue arginine 154. A run of 3 helical transmembrane segments spans residues 189 to 209 (LYEAFLEGLVLFFVLFVLVWG), 217 to 237 (GFVAGAFVTGYGLSRIAVEFF), and 247 to 267 (LFGGWLTMGMVLSVPMVLLGL).

It belongs to the Lgt family.

The protein resides in the cell inner membrane. It carries out the reaction L-cysteinyl-[prolipoprotein] + a 1,2-diacyl-sn-glycero-3-phospho-(1'-sn-glycerol) = an S-1,2-diacyl-sn-glyceryl-L-cysteinyl-[prolipoprotein] + sn-glycerol 1-phosphate + H(+). It functions in the pathway protein modification; lipoprotein biosynthesis (diacylglyceryl transfer). Catalyzes the transfer of the diacylglyceryl group from phosphatidylglycerol to the sulfhydryl group of the N-terminal cysteine of a prolipoprotein, the first step in the formation of mature lipoproteins. In Brucella canis (strain ATCC 23365 / NCTC 10854 / RM-666), this protein is Phosphatidylglycerol--prolipoprotein diacylglyceryl transferase.